The chain runs to 483 residues: Docking protein 1 (483 aa).

Met1 carries the post-translational modification N-acetylmethionine. The PH domain maps to 4 to 119; sequence AVMEGPLFLQ…WVQTLCQNAF (116 aa). Ser48 bears the Phosphoserine mark. An IRS-type PTB domain is found at 151 to 259; it reads EGSQFWVTVQ…HRQKIQGKAG (109 aa). 2 positions are modified to phosphoserine: Ser269 and Ser291. The tract at residues 293-326 is disordered; that stretch reads PALYSEPLDSLRIPPGPSQDSLYSDPLDSTPARA. Phosphotyrosine is present on residues Tyr296, Tyr337, Tyr362, Tyr377, Tyr398, and Tyr409. Residues 409 to 483 form a disordered region; the sequence is YAVPPPRSTK…RTGAKSEGST (75 aa). A compositionally biased stretch (pro residues) spans 411 to 424; it reads VPPPRSTKPFPAPK. Ser416 carries the post-translational modification Phosphoserine. The span at 434–460 shows a compositional bias: polar residues; that stretch reads GAATGSGSQGHSSDTALYSQVQKSGAS. Tyr451 bears the Phosphotyrosine mark. Position 462 is a phosphoserine (Ser462).

This sequence belongs to the DOK family. Type A subfamily. Interacts with RasGAP, INPP5D/SHIP1 and ABL1. Interacts directly with phosphorylated ITGB3. Interacts with SRMS (via the SH2 and SH3 domains). Post-translationally, constitutively tyrosine-phosphorylated. Phosphorylated by TEC. Phosphorylated by LYN. Phosphorylated on tyrosine residues by the insulin receptor kinase. Results in the negative regulation of the insulin signaling pathway. Phosphorylated on tyrosine residues by SRMS.

Its subcellular location is the cytoplasm. It is found in the nucleus. In terms of biological role, DOK proteins are enzymatically inert adaptor or scaffolding proteins. They provide a docking platform for the assembly of multimolecular signaling complexes. DOK1 appears to be a negative regulator of the insulin signaling pathway. Modulates integrin activation by competing with talin for the same binding site on ITGB3. This Bos taurus (Bovine) protein is Docking protein 1 (DOK1).